The chain runs to 905 residues: Methionine--tRNA ligase, cytoplasmic (905 aa).

A GST N-terminal domain is found at 1-75; it reads MKLFVGEGNP…YFYLSSGHDM (75 aa). Positions 72-199 constitute a GST C-terminal domain; the sequence is GHDMCDLSNQ…DKGSSVFKPF (128 aa). The 'HIGH' region signature appears at 271 to 281; the sequence is PYVNNVPHLGN. A 'KMSKS' region motif is present at residues 591-595; that stretch reads KFSKS. Lys594 is an ATP binding site. Disordered stretches follow at residues 813–874 and 886–905; these read RFGG…VIDP and LALAEGKSPDPPTQKGKKKK. Residues 841–874 are compositionally biased toward basic and acidic residues; it reads GPERVKELMQELEKQGNHVRELKGKKAEKSVIDP. Positions 844–900 constitute a WHEP-TRS domain; sequence RVKELMQELEKQGNHVRELKGKKAEKSVIDPEVQKLLALKKELALAEGKSPDPPTQK.

Belongs to the class-I aminoacyl-tRNA synthetase family. Monomer. Part of a multisubunit complex that groups tRNA ligases for Arg (RARS1), Asp (DARS1), Gln (QARS1), Ile (IARS1), Leu (LARS1), Lys (KARS1), Met (MARS1) the bifunctional ligase for Glu and Pro (EPRS1) and the auxiliary subunits AIMP1/p43, AIMP2/p38 and EEF1E1/p18.

It is found in the cytoplasm. The protein resides in the cytosol. The protein localises to the nucleus. Its subcellular location is the nucleolus. The enzyme catalyses tRNA(Met) + L-methionine + ATP = L-methionyl-tRNA(Met) + AMP + diphosphate. In terms of biological role, catalyzes the specific attachment of an amino acid to its cognate tRNA in a 2 step reaction: the amino acid (AA) is first activated by ATP to form AA-AMP and then transferred to the acceptor end of the tRNA. Plays a role in the synthesis of ribosomal RNA in the nucleolus. In Xenopus laevis (African clawed frog), this protein is Methionine--tRNA ligase, cytoplasmic (mars1).